The following is a 179-amino-acid chain: ADP-ribosylation factor 1-like 1 (179 aa).

Residue Gly2 is the site of N-myristoyl glycine attachment. The interval 3 to 16 is important for the stable binding to the membranes; that stretch reads LFFSKISSFMFPNI. GTP is bound by residues 24 to 32, 126 to 129, and Ala160; these read GLDGAGKTT and NKQD.

The protein belongs to the small GTPase superfamily. Arf family.

It localises to the golgi apparatus membrane. The enzyme catalyses GTP + H2O = GDP + phosphate + H(+). Alternates between an inactive GDP-bound form and an active GTP-bound form. Activated by a guanine nucleotide-exchange factor (GEF) and inactivated by GTPase-activating protein (GAP). Its function is as follows. Small GTPase involved in protein trafficking between different compartments. Modulates vesicle budding and uncoating within the Golgi complex. In its GTP-bound form, triggers the recruitment of coatomer proteins to the Golgi membrane. The hydrolysis of ARF1-bound GTP, which is mediated by ARFGAPs proteins, is required for dissociation of coat proteins from Golgi membranes and vesicles. The protein is ADP-ribosylation factor 1-like 1 (arf-1.1) of Caenorhabditis elegans.